Reading from the N-terminus, the 222-residue chain is Deoxyribose-phosphate aldolase (222 aa).

D93 (proton donor/acceptor) is an active-site residue. K156 serves as the catalytic Schiff-base intermediate with acetaldehyde. Residue K186 is the Proton donor/acceptor of the active site.

The protein belongs to the DeoC/FbaB aldolase family. DeoC type 1 subfamily.

It localises to the cytoplasm. The catalysed reaction is 2-deoxy-D-ribose 5-phosphate = D-glyceraldehyde 3-phosphate + acetaldehyde. It participates in carbohydrate degradation; 2-deoxy-D-ribose 1-phosphate degradation; D-glyceraldehyde 3-phosphate and acetaldehyde from 2-deoxy-alpha-D-ribose 1-phosphate: step 2/2. Its function is as follows. Catalyzes a reversible aldol reaction between acetaldehyde and D-glyceraldehyde 3-phosphate to generate 2-deoxy-D-ribose 5-phosphate. The protein is Deoxyribose-phosphate aldolase of Corynebacterium glutamicum (strain ATCC 13032 / DSM 20300 / JCM 1318 / BCRC 11384 / CCUG 27702 / LMG 3730 / NBRC 12168 / NCIMB 10025 / NRRL B-2784 / 534).